The primary structure comprises 389 residues: MALTPESPSSFPGLAAIGSSVPEPPGSPNATLNSSWASPTEPSSLEDLVATGAIGTLLSAMGVVGVVGNAYTLVVTCRSLRAVASMYIYVVNLALADLLYLLSIPFIVATYITKEWHFGDVGCRVLFSLDFLTMHASIFTLTVMSSERYAAVLRPLDTVQRPKGYRKLLALGTWLLALLLTLPVMLAMRLVRRGPKSLCLPAWGPRAHRAYLTLLFATSIAGPGLLIGLLYARLARAYRRSQRASFKRARRPGARALRLVLGIVLLFWACFLPFWLWQLLAQYREAPLAPRTARIVNYLTTCLTYGNSCANPFLYTLLTRNYRDHLRGRVRSPGSGGVRGPVPSLQPRARFQRGSGRSLSSCSPQPTESLVLAAAAPAGPALESPGDPA.

2 stretches are compositionally biased toward polar residues: residues 1 to 10 (MALTPESPSS) and 28 to 39 (PNATLNSSWASP). A disordered region spans residues 1-39 (MALTPESPSSFPGLAAIGSSVPEPPGSPNATLNSSWASP). Residues 1–54 (MALTPESPSSFPGLAAIGSSVPEPPGSPNATLNSSWASPTEPSSLEDLVATGAI) lie on the Extracellular side of the membrane. N-linked (GlcNAc...) asparagine glycosylation is found at N29 and N33. A helical membrane pass occupies residues 55–77 (GTLLSAMGVVGVVGNAYTLVVTC). The Cytoplasmic segment spans residues 78–87 (RSLRAVASMY). Residues 88–113 (IYVVNLALADLLYLLSIPFIVATYIT) traverse the membrane as a helical segment. Residues 114 to 124 (KEWHFGDVGCR) lie on the Extracellular side of the membrane. An intrachain disulfide couples C123 to C199. A helical transmembrane segment spans residues 125-146 (VLFSLDFLTMHASIFTLTVMSS). At 147-167 (ERYAAVLRPLDTVQRPKGYRK) the chain is on the cytoplasmic side. A helical membrane pass occupies residues 168–186 (LLALGTWLLALLLTLPVML). The Extracellular portion of the chain corresponds to 187–209 (AMRLVRRGPKSLCLPAWGPRAHR). The chain crosses the membrane as a helical span at residues 210-232 (AYLTLLFATSIAGPGLLIGLLYA). At 233–258 (RLARAYRRSQRASFKRARRPGARALR) the chain is on the cytoplasmic side. Residues 259–284 (LVLGIVLLFWACFLPFWLWQLLAQYR) form a helical membrane-spanning segment. The Extracellular segment spans residues 285 to 297 (EAPLAPRTARIVN). Residues 298-318 (YLTTCLTYGNSCANPFLYTLL) traverse the membrane as a helical segment. At 319–389 (TRNYRDHLRG…PALESPGDPA (71 aa)) the chain is on the cytoplasmic side. Residues 328 to 366 (GRVRSPGSGGVRGPVPSLQPRARFQRGSGRSLSSCSPQP) form a disordered region. Residues 355–366 (SGRSLSSCSPQP) show a composition bias toward polar residues.

This sequence belongs to the G-protein coupled receptor 1 family.

It localises to the cell membrane. High affinity receptor for urotensin-2 and urotensin-2B. The activity of this receptor is mediated by a G-protein that activate a phosphatidylinositol-calcium second messenger system. The protein is Urotensin-2 receptor (UTS2R) of Macaca mulatta (Rhesus macaque).